Reading from the N-terminus, the 314-residue chain is MAFVTRQFLRSMSSSSSASAAAKKILIKHVTVIGGGLMGAGIAQVAAATGHTVVLVDQTEDILAKSKKGIEESLKRMAKKKFTENPKAGDEFVEKTLSCLSTSTDAASVVHSTDLVVEAIVENLKLKNELFQRLDKFAAEHTIFASNTSSLQITNIANATTRQDRFAGLHFFNPVPMMKLVEVIKTPMTSQKTFESLVDFCKTLGKHPVSCKDTPGFIVNRLLVPYLIEAVRLHERGDASKEDIDTAMKLGAGYPMGPFELLDYVGLDTTKFILDGWHEMEPENPLFQPSPSMNNLVAQKKLGKKTGEGFYKYK.

Residues 1 to 12 constitute a mitochondrion transit peptide; it reads MAFVTRQFLRSM. NAD(+) is bound by residues 34 to 39 and D57; that span reads GGGLMG. S73 provides a ligand contact to CoA. Position 75 is an N6-acetyllysine (K75). K80 serves as a coordination point for CoA. K80 carries the post-translational modification N6-succinyllysine. An N6-acetyllysine; alternate mark is found at K81 and K87. K81 and K87 each carry N6-succinyllysine; alternate. An NAD(+)-binding site is contributed by E122. At K125 the chain carries N6-acetyllysine. K127 contributes to the NAD(+) binding site. At K127 the chain carries N6-(2-hydroxyisobutyryl)lysine. K136 is subject to N6-acetyllysine; alternate. At K136 the chain carries N6-succinyllysine; alternate. Residues S149 and N173 each contribute to the NAD(+) site. A CoA-binding site is contributed by S149. At K179 the chain carries N6-acetyllysine. N6-acetyllysine; alternate occurs at positions 185, 192, and 202. Residues K185, K192, and K202 each carry the N6-succinyllysine; alternate modification. Residue K206 is modified to N6-succinyllysine. 2 positions are modified to N6-acetyllysine; alternate: K212 and K241. Residues K212 and K241 each carry the N6-succinyllysine; alternate modification. Position 305 (K305) interacts with NAD(+). Position 312 is an N6-acetyllysine; alternate (K312). K312 bears the N6-succinyllysine; alternate mark.

This sequence belongs to the 3-hydroxyacyl-CoA dehydrogenase family. Homodimer. Interacts with GLUD1; this interaction inhibits the activation of glutamate dehydrogenase 1 (GLUD1). Succinylation at Lys-81, adjacent to a coenzyme A binding site. Desuccinylated by SIRT5. In terms of tissue distribution, expressed in liver, kidney, brain, and pancreatic islets.

Its subcellular location is the mitochondrion matrix. The protein localises to the nucleus. It is found in the cytoplasm. The protein resides in the cytosol. It carries out the reaction a (3S)-3-hydroxyacyl-CoA + NAD(+) = a 3-oxoacyl-CoA + NADH + H(+). The catalysed reaction is (3S)-3-hydroxybutanoyl-CoA + NAD(+) = acetoacetyl-CoA + NADH + H(+). It catalyses the reaction (3S)-hydroxydecanoyl-CoA + NAD(+) = 3-oxodecanoyl-CoA + NADH + H(+). The enzyme catalyses (3S)-hydroxyhexadecanoyl-CoA + NAD(+) = 3-oxohexadecanoyl-CoA + NADH + H(+). It functions in the pathway lipid metabolism; fatty acid beta-oxidation. In terms of biological role, mitochondrial fatty acid beta-oxidation enzyme that catalyzes the third step of the beta-oxidation cycle for medium and short-chain 3-hydroxy fatty acyl-CoAs (C4 to C10). Plays a role in the control of insulin secretion by inhibiting the activation of glutamate dehydrogenase 1 (GLUD1), an enzyme that has an important role in regulating amino acid-induced insulin secretion. Plays a role in the maintenance of normal spermatogenesis through the reduction of fatty acid accumulation in the testes. Functionally, inhibits cell proliferation. This chain is Hydroxyacyl-coenzyme A dehydrogenase, mitochondrial (Hadh), found in Mus musculus (Mouse).